An 864-amino-acid chain; its full sequence is MTTEKSLVTEAENSQHQQKEEGEEAINSGQQEPQQEESCQTAAEGDNWCEQKLKASNGDTPTHEDLTKNKERTSESRGLSRLFSSFLKRPKSQVSEEEGKEVESDKEKGEGGQKEIEFGTSLDEEIILKAPIAAPEPELKTDPSLDLHSLSSAETQPAQEELREDPDFEIKEGEGLEECSKIEVKEESPQSKAETELKASQKPIRKHRNMHCKVSLLDDTVYECVVEKHAKGQDLLKRVCEHLNLLEEDYFGLAIWDNATSKTWLDSAKEIKKQVRGVPWNFTFNVKFYPPDPAQLTEDITRYYLCLQLRQDIVAGRLPCSFATLALLGSYTIQSELGDYDPELHGVDYVSDFKLAPNQTKELEEKVMELHKSYRSMTPAQADLEFLENAKKLSMYGVDLHKAKDLEGVDIILGVCSSGLLVYKDKLRINRFPWPKVLKISYKRSSFFIKIRPGEQEQYESTIGFKLPSYRAAKKLWKVCVEHHTFFRLTSTDTIPKSKFLALGSKFRYSGRTQAQTRQASALIDRPAPHFERTASKRASRSLDGAAAVDSADRSPRPTSAPAITQGQVAEGGVLDASAKKTVVPKAQKETVKAEVKKEDEPPEQAEPEPTEAWKVEKTHIEVTVPTSNGDQTQKLAEKTEDLIRMRKKKRERLDGENIYIRHSNLMLEDLDKSQEEIKKHHASISELKKNFMESVPEPRPSEWDKRLSTHSPFRTLNINGQIPTGEGPPLVKTQTVTISDNANAVKSEIPTKDVPIVHTETKTITYEAAQTDDNSGDLDPGVLLTAQTITSETPSSTTTTQITKTVKGGISETRIEKRIVITGDADIDHDQVLVQAIKEAKEQHPDMSVTKVVVHQETEIADE.

2 stretches are compositionally biased toward polar residues: residues 1-16 (MTTE…NSQH) and 27-41 (NSGQ…SCQT). 3 disordered regions span residues 1–122 (MTTE…GTSL), 136–170 (EPEL…DFEI), and 182–202 (IEVK…ASQK). Position 14 is a phosphoserine (Ser14). A Phosphothreonine; by CDK1 modification is found at Thr60. Positions 61 to 75 (PTHEDLTKNKERTSE) are enriched in basic and acidic residues. Residues 76–87 (SRGLSRLFSSFL) are compositionally biased toward low complexity. Ser84, Ser85, Ser95, Ser104, Ser121, Ser149, Ser151, Ser152, Ser188, and Ser191 each carry phosphoserine. The span at 101–117 (EVESDKEKGEGGQKEIE) shows a compositional bias: basic and acidic residues. A compositionally biased stretch (polar residues) spans 149 to 158 (SLSSAETQPA). A compositionally biased stretch (basic and acidic residues) spans 182 to 199 (IEVKEESPQSKAETELKA). An FERM domain is found at 210 to 491 (MHCKVSLLDD…EHHTFFRLTS (282 aa)). The residue at position 222 (Tyr222) is a Phosphotyrosine. Thr378 carries the phosphothreonine modification. The segment at 494 to 614 (TIPKSKFLAL…QAEPEPTEAW (121 aa)) is hydrophilic. Disordered regions lie at residues 518 to 572 (RQAS…VAEG) and 586 to 611 (KAQK…PEPT). Residues Ser521, Ser540, Ser542, and Ser555 each carry the phosphoserine modification. Residues 587–600 (AQKETVKAEVKKED) are compositionally biased toward basic and acidic residues. The span at 601 to 610 (EPPEQAEPEP) shows a compositional bias: acidic residues. The segment at 615–713 (KVEKTHIEVT…WDKRLSTHSP (99 aa)) is spectrin--actin-binding. Tyr660 carries the post-translational modification Phosphotyrosine; by EGFR. Ser664, Ser674, Ser684, and Ser709 each carry phosphoserine. Ser712 bears the Phosphoserine; by CDK1 mark. Positions 714–864 (FRTLNINGQI…VHQETEIADE (151 aa)) are C-terminal (CTD). A phosphothreonine mark is found at Thr736 and Thr859.

As to quaternary structure, binds with a high affinity to glycophorin and with lower affinity to band III protein. Associates with the nuclear mitotic apparatus. Interacts with calmodulin. Interacts with CPAP. Interacts with DLG1. Also found to associate with contractile apparatus and tight junctions. Interacts with NUMA1; this interaction is negatively regulated by CDK1 during metaphase and promotes anaphase-specific localization of NUMA1 in symmetrically dividing cells. Interacts with ATP2B1; regulates small intestinal calcium absorption through regulation of membrane expression of ATP2B1. Phosphorylated at multiple sites by different protein kinases and each phosphorylation event selectively modulates the protein's functions. In terms of processing, phosphorylation on Tyr-660 reduces the ability of 4.1 to promote the assembly of the spectrin/actin/4.1 ternary complex. Post-translationally, O-glycosylated; contains N-acetylglucosamine side chains in the C-terminal domain.

The protein resides in the cytoplasm. It is found in the cytoskeleton. The protein localises to the cell cortex. Its subcellular location is the nucleus. In terms of biological role, protein 4.1 is a major structural element of the erythrocyte membrane skeleton. It plays a key role in regulating membrane physical properties of mechanical stability and deformability by stabilizing spectrin-actin interaction. Recruits DLG1 to membranes. Required for dynein-dynactin complex and NUMA1 recruitment at the mitotic cell cortex during anaphase. The polypeptide is Protein 4.1 (Homo sapiens (Human)).